The primary structure comprises 1096 residues: Protein EMBRYONIC FLOWER 1 (1096 aa).

Disordered regions lie at residues 155–189 (KARGRPMGASNVRSKSRKLVSPEQVGNNRSKEKLN), 274–296 (KTSGGSNIRKEESALKKESVRGR), 315–348 (GATSENASKSCDSDQGNSESTDSGFDRTPFKGKQ), 366–420 (ETSQ…KKPV), 563–612 (LSRV…DIPM), 629–651 (DKEEDVSNKQPSQETAHKSKNAL), 1007–1032 (DKEKKQKRKAESCNNNASAGPVKNSS), and 1070–1096 (FKKKPAVCKQDAMKQTKKPVCPPTQNA). 2 short sequence motifs (nuclear localization signal) span residues 170–177 (SRKLVSPE) and 281–288 (IRKEESAL). Positions 281–294 (IRKEESALKKESVR) are enriched in basic and acidic residues. Polar residues predominate over residues 315–337 (GATSENASKSCDSDQGNSESTDS). The interval 337-617 (SGFDRTPFKG…DDIPMEIVEL (281 aa)) is DNA-binding. Basic and acidic residues predominate over residues 371–381 (GIKEHDADPSK). A compositionally biased stretch (polar residues) spans 382 to 394 (RSTPAHSLFTGND). Residues 572-601 (SGADRKGKTVMVQEHHGAPRSQSHDRKETT) are compositionally biased toward basic and acidic residues. Positions 866–1096 (LDPRLRSTTP…KPVCPPTQNA (231 aa)) are DNA-binding. A compositionally biased stretch (polar residues) spans 1018 to 1032 (SCNNNASAGPVKNSS). Residues 1071–1078 (KKKPAVCK) carry the Nuclear localization signal 3 motif.

Interacts with MSI1. In terms of tissue distribution, expressed in mature embryo, root tips, cotyledons, leaves, stems, shoot apex, and flower clusters, with highest levels in flowers. The presence in the shoot apical meristem (SAM) is required to maintain vegetative development and prevent early flowering.

It is found in the nucleus. Functionally, transcription repressor that regulates phase transition during shoot, flower and seeds development. Controls leaves development, shoot architecture and flowering by delaying both the vegetative to reproductive transition and flower initiation. Participates in polycomb group (PcG) protein complex-mediated (including EMF2) silencing of the flower homeotic genes AGAMOUS (AG), PISTILLATA (PI), and APETALA3 (AP3), as well as of some regulatory genes such as ABSCISIC ACID INSENSITIVE3 (ABI3), LONG VEGETATIVE PHASE1 (LOV1), and FLOWERING LOCUS C (FLC) during vegetative development. Required for histone methylation or for maintaining a stable histone methylation (e.g. H3K27me3) pattern of repressed target genes (including genes involved in salt stress response and flower development); this repression is counteracted by ULT1. Can bind non specifically DNA (both double- and single-stranded) and RNA. In Arabidopsis thaliana (Mouse-ear cress), this protein is Protein EMBRYONIC FLOWER 1.